A 137-amino-acid polypeptide reads, in one-letter code: Holo-[acyl-carrier-protein] synthase (137 aa).

Mg(2+)-binding residues include D8 and E57.

This sequence belongs to the P-Pant transferase superfamily. AcpS family. Requires Mg(2+) as cofactor.

The protein resides in the cytoplasm. It carries out the reaction apo-[ACP] + CoA = holo-[ACP] + adenosine 3',5'-bisphosphate + H(+). Transfers the 4'-phosphopantetheine moiety from coenzyme A to a Ser of acyl-carrier-protein. This is Holo-[acyl-carrier-protein] synthase from Hyphomonas neptunium (strain ATCC 15444).